The chain runs to 573 residues: CTP synthase (573 aa).

The tract at residues 1-281 is amidoligase domain; that stretch reads MGQTRIQART…DAYVVRRLGL (281 aa). CTP is bound at residue Ser23. Ser23 contacts UTP. ATP contacts are provided by residues 24-29 and Asp81; that span reads SLGKGL. Positions 81 and 155 each coordinate Mg(2+). CTP-binding positions include 162-164, 202-207, and Lys238; these read DIE and KTKPTQ. Residues 202 to 207 and Lys238 contribute to the UTP site; that span reads KTKPTQ. Positions 306-554 constitute a Glutamine amidotransferase type-1 domain; the sequence is EVALVGKYVD…IAAALKYKLA (249 aa). Position 369 (Gly369) interacts with L-glutamine. Cys396 acts as the Nucleophile; for glutamine hydrolysis in catalysis. Residues 397–400, Glu419, and Arg480 contribute to the L-glutamine site; that span reads LGLQ. Active-site residues include His527 and Glu529.

This sequence belongs to the CTP synthase family. In terms of assembly, homotetramer.

The enzyme catalyses UTP + L-glutamine + ATP + H2O = CTP + L-glutamate + ADP + phosphate + 2 H(+). It catalyses the reaction L-glutamine + H2O = L-glutamate + NH4(+). The catalysed reaction is UTP + NH4(+) + ATP = CTP + ADP + phosphate + 2 H(+). The protein operates within pyrimidine metabolism; CTP biosynthesis via de novo pathway; CTP from UDP: step 2/2. With respect to regulation, allosterically activated by GTP, when glutamine is the substrate; GTP has no effect on the reaction when ammonia is the substrate. The allosteric effector GTP functions by stabilizing the protein conformation that binds the tetrahedral intermediate(s) formed during glutamine hydrolysis. Inhibited by the product CTP, via allosteric rather than competitive inhibition. In terms of biological role, catalyzes the ATP-dependent amination of UTP to CTP with either L-glutamine or ammonia as the source of nitrogen. Regulates intracellular CTP levels through interactions with the four ribonucleotide triphosphates. This is CTP synthase from Nocardia farcinica (strain IFM 10152).